Here is an 858-residue protein sequence, read N- to C-terminus: MSESDKYELLEKIGHGSFGIIRKVRRKADGMILCRKEISYLKMSQKEREQLHAEFSILSTLRHPNIVGYYHREHLKATQDLHLYMEYCGNGDLGRVIRNLIKNNQYAEESFVWSIFSQLVTALYRCHYGVDPPEVGKTVLGLGSTARPKPPSGGMTILHRDLKPENVFLGEDNSVKLGDFGLSKVMQSHDFASTYVGTPFYMSPEICAAEKYTLKSDIWSLGCIIYELCAREPPFNAKTHYQLVQKIKEGKIAPLPSVYSGELFATIKDCLRVNPDRRPDTATLLNLPIVRLMRKEKEVVEFSRTLRTKEETLNKRIRELDSKLSALETEKSSIRAEIDASLRREWEVKARLEIDRLVAQEIESLQQKFEQEVQARVEAELQRHGRGPMFNSHGQQGSFSSTAATLVSDYNLSSVGSGDGDFPSTTDITDISIAESTDGSDITKKIPRTPFHRAQTYSSAPAESVLGTPMDIEMASPSPITIASLSLSPRRMALTKAPTTNPRMIFGEEPTSTDKSNWEVPRETEMIDSGDESEAEALVPSPKRITKSSKNPFSTVTTRSRPSLNSQQNSNVLPIHGLRSKQTLATRSKTVSGVSSIGQHPLRSAPSAPSLRDRKPSPTRRLSRIPSVTGVGRRLSANNINNSSNGGSDAPSSTVTSNITVRTRGLKRMSSTCDESSFSQQQNNQPQQSLPQAPPLKKIGLMAAKNIRGSSLVELHQARAGGRPISAIISNEAKLRAFKEHATIAASAVDSSSSSSSSSGQSQLPTRPRSQPQPITANFEQQQQQQQSNTNSISSSNSAGSGSATGTGTGAGTKSMPWPVAPVWNREVETEEMPSPFIVKTSKRPASFVRPASNLSQS.

Residues 7-290 enclose the Protein kinase domain; sequence YELLEKIGHG…TATLLNLPIV (284 aa). Residues 13 to 21 and lysine 36 each bind ATP; that span reads IGHGSFGII. The Proton acceptor role is filled by aspartate 161. Residue threonine 194 is modified to Phosphothreonine; by autocatalysis. Positions 291–383 form a coiled coil; sequence RLMRKEKEVV…QARVEAELQR (93 aa). Disordered stretches follow at residues 495 to 693 and 747 to 858; these read TKAP…LPQA and SAVD…LSQS. A compositionally biased stretch (basic and acidic residues) spans 516 to 525; it reads SNWEVPRETE. Residues 526–535 are compositionally biased toward acidic residues; sequence MIDSGDESEA. Composition is skewed to polar residues over residues 548–572 and 580–598; these read SSKN…NSNV and SKQT…SSIG. Low complexity predominate over residues 636–648; that stretch reads SANNINNSSNGGS. Residues 650–661 show a composition bias toward polar residues; that stretch reads APSSTVTSNITV. Residues 676–691 show a composition bias toward low complexity; it reads SSFSQQQNNQPQQSLP. The span at 760 to 780 shows a compositional bias: polar residues; the sequence is GQSQLPTRPRSQPQPITANFE. The segment covering 781–802 has biased composition (low complexity); that stretch reads QQQQQQQSNTNSISSSNSAGSG.

It belongs to the protein kinase superfamily. CAMK Ser/Thr protein kinase family.

The protein localises to the nucleus. The catalysed reaction is L-seryl-[protein] + ATP = O-phospho-L-seryl-[protein] + ADP + H(+). It catalyses the reaction L-threonyl-[protein] + ATP = O-phospho-L-threonyl-[protein] + ADP + H(+). Protein kinase that plays an important role in mitotic regulation. The polypeptide is G2-specific protein kinase nim-1 (nim-1) (Neurospora crassa (strain ATCC 24698 / 74-OR23-1A / CBS 708.71 / DSM 1257 / FGSC 987)).